Consider the following 450-residue polypeptide: MRATAAKKVFIKTYGCQMNVYDSQRMGDALAADGYTATDAIDEADLVLLNTCHIREKAAEKVYSELGRIRDMKAERAIAGRELLIGVAGCVAQAEGAEIIRRSPAVDLVIGPQTYHRLPDVLARVRGGEKIVETDYAIEDKFDHLPQPKRAEVIKRGVTAFLTVQEGCDKFCTFCVVPYTRGSEVSRPVAQIVAEAERLAEAGVREVTLLGQNVNAWHGQGENGEEWGLGRLLFRLAEIPGLARLRYTTSHPRDMDDELISAHRDLPSLMPYLHLPVQSGSDRILKAMNRRHTARDYLALLDRIRAARPDIALSGDFIVGFPGETEADFEATMELVRQVNYASAFSFKYSPRPGTPGAEMPDHVPETLKDERLQRLQALLLKQQQGFGSSLVGSTIDTLIEKPGRQAGQKVGRTPWLQPVIVDEKAGEIGDIIQVRITKTGYNSLFAELA.

The 121-residue stretch at 7-127 folds into the MTTase N-terminal domain; the sequence is KKVFIKTYGC…LPDVLARVRG (121 aa). Residues Cys16, Cys52, Cys90, Cys168, Cys172, and Cys175 each contribute to the [4Fe-4S] cluster site. One can recognise a Radical SAM core domain in the interval 154–388; it reads IKRGVTAFLT…LLLKQQQGFG (235 aa). In terms of domain architecture, TRAM spans 389–450; it reads SSLVGSTIDT…GYNSLFAELA (62 aa).

This sequence belongs to the methylthiotransferase family. MiaB subfamily. In terms of assembly, monomer. [4Fe-4S] cluster serves as cofactor.

The protein localises to the cytoplasm. It catalyses the reaction N(6)-dimethylallyladenosine(37) in tRNA + (sulfur carrier)-SH + AH2 + 2 S-adenosyl-L-methionine = 2-methylsulfanyl-N(6)-dimethylallyladenosine(37) in tRNA + (sulfur carrier)-H + 5'-deoxyadenosine + L-methionine + A + S-adenosyl-L-homocysteine + 2 H(+). Functionally, catalyzes the methylthiolation of N6-(dimethylallyl)adenosine (i(6)A), leading to the formation of 2-methylthio-N6-(dimethylallyl)adenosine (ms(2)i(6)A) at position 37 in tRNAs that read codons beginning with uridine. The polypeptide is tRNA-2-methylthio-N(6)-dimethylallyladenosine synthase (Mesorhizobium japonicum (strain LMG 29417 / CECT 9101 / MAFF 303099) (Mesorhizobium loti (strain MAFF 303099))).